A 271-amino-acid chain; its full sequence is 4,5-DOPA dioxygenase extradiol (271 aa).

Zn(2+) contacts are provided by histidine 22, histidine 57, histidine 177, and histidine 234.

The protein belongs to the DODA-type extradiol aromatic ring-opening dioxygenase family. As to quaternary structure, monomer. Zn(2+) serves as cofactor.

The protein resides in the cytoplasm. The enzyme catalyses L-dopa + O2 = 4-(L-alanin-3-yl)-2-hydroxy-cis,cis-muconate 6-semialdehyde + H(+). In vitro, opens the cyclic ring of dihydroxy-phenylalanine (DOPA) between carbons 4 and 5, thus producing an unstable seco-DOPA that rearranges nonenzymatically to betalamic acid. The physiological substrate is unknown. The sequence is that of 4,5-DOPA dioxygenase extradiol (ygiD) from Escherichia coli (strain K12).